Reading from the N-terminus, the 157-residue chain is Isotocin-neurophysin IT 1 (157 aa).

The first 20 residues, 1–20 (MFGTSVSALCLLFLLSVCTA), serve as a signal peptide directing secretion. Cys-21 and Cys-26 are joined by a disulfide. Residue Gly-29 is modified to Glycine amide. 7 cysteine pairs are disulfide-bonded: Cys-42-Cys-86, Cys-45-Cys-59, Cys-53-Cys-76, Cys-60-Cys-66, Cys-93-Cys-106, Cys-100-Cys-118, and Cys-107-Cys-112.

The protein belongs to the vasopressin/oxytocin family. Post-translationally, seven disulfide bonds are present in neurophysin.

It is found in the secreted. Its function is as follows. Isotocin causes contraction of smooth muscles. In Oncorhynchus keta (Chum salmon), this protein is Isotocin-neurophysin IT 1.